A 381-amino-acid polypeptide reads, in one-letter code: Homoserine O-succinyltransferase (381 aa).

The 316-residue stretch at 45-360 (NAVLVCHALN…PHGHDAFLLD (316 aa)) folds into the AB hydrolase-1 domain. The active-site Nucleophile is Ser-151. Arg-221 contacts substrate. Residues Asp-321 and His-354 contribute to the active site. A substrate-binding site is contributed by Asp-355.

The protein belongs to the AB hydrolase superfamily. MetX family. As to quaternary structure, homodimer.

The protein localises to the cytoplasm. The enzyme catalyses L-homoserine + succinyl-CoA = O-succinyl-L-homoserine + CoA. The protein operates within amino-acid biosynthesis; L-methionine biosynthesis via de novo pathway; O-succinyl-L-homoserine from L-homoserine: step 1/1. Transfers a succinyl group from succinyl-CoA to L-homoserine, forming succinyl-L-homoserine. The protein is Homoserine O-succinyltransferase of Paraburkholderia phymatum (strain DSM 17167 / CIP 108236 / LMG 21445 / STM815) (Burkholderia phymatum).